The primary structure comprises 446 residues: Mycosin-1 (446 aa).

The N-terminal stretch at 1–21 is a signal peptide; the sequence is MHRIFLITVALALLTASPASA. The disordered stretch occupies residues 24–43; the sequence is PPPIDPGALPPDVTGPDQPT. Positions 64-387 constitute a Peptidase S8 domain; sequence PWSNTYLGVA…AGVIDAVAAL (324 aa). Active-site charge relay system residues include aspartate 90, histidine 121, and serine 332. A helical membrane pass occupies residues 419 to 439; it reads ITAVALVAVGLTLALGLGALA.

The protein belongs to the peptidase S8 family.

The protein localises to the cell membrane. Its function is as follows. May play a dual role in regulation of ESX-1 secretion and virulence. Acts as a protease that cleaves EspB. Essential for ESX-1 function, required for early replication in macrophages and full virulence in mice. In Mycobacterium tuberculosis (strain ATCC 25618 / H37Rv), this protein is Mycosin-1.